The chain runs to 181 residues: Adenylate kinase (181 aa).

Residue 10 to 15 (GAGKGT) coordinates ATP. Residues 30–59 (STGDLFRANIGEGTPLGIEAKQYIDAGKLV) form an NMP region. AMP-binding positions include Thr-31, Arg-36, 57-59 (KLV), 85-88 (GFPR), and Gln-92. Positions 126–132 (SRGRADD) are LID. Position 127 (Arg-127) interacts with ATP. 2 residues coordinate AMP: Arg-129 and Arg-140. An ATP-binding site is contributed by Gly-166.

This sequence belongs to the adenylate kinase family. As to quaternary structure, monomer.

The protein localises to the cytoplasm. The enzyme catalyses AMP + ATP = 2 ADP. The protein operates within purine metabolism; AMP biosynthesis via salvage pathway; AMP from ADP: step 1/1. In terms of biological role, catalyzes the reversible transfer of the terminal phosphate group between ATP and AMP. Plays an important role in cellular energy homeostasis and in adenine nucleotide metabolism. This chain is Adenylate kinase, found in Corynebacterium glutamicum (strain R).